The following is a 216-amino-acid chain: Cytidylate kinase (216 aa).

An ATP-binding site is contributed by glycine 7–threonine 15.

The protein belongs to the cytidylate kinase family. Type 1 subfamily.

It is found in the cytoplasm. It catalyses the reaction CMP + ATP = CDP + ADP. The catalysed reaction is dCMP + ATP = dCDP + ADP. This Chlamydia felis (strain Fe/C-56) (Chlamydophila felis) protein is Cytidylate kinase.